The chain runs to 172 residues: Stellate protein CG33238 (172 aa).

It belongs to the casein kinase 2 subunit beta family. Interacts in vitro with the casein kinase 2 alpha subunit (CkII-alpha). The relevance of such interaction is however unclear in vivo. In terms of tissue distribution, probably not expressed in wild-type flies. In males lacking the Y chromosome, it is testis-specific and constitutes the main component of star-shaped crystals.

Its function is as follows. Unknown. In males lacking the Y chromosome, its strong overexpression leads to the appearance of proteinaceous star-shaped crystals in the primary spermatocytes causing meiotic drive, possibly by interfering with normal casein kinase 2 activity. The sequence is that of Stellate protein CG33238 (Ste:CG33238) from Drosophila melanogaster (Fruit fly).